A 181-amino-acid chain; its full sequence is ATP synthase subunit b (181 aa).

A helical transmembrane segment spans residues 16-36 (LIPPIPELVIGLIAFVIVFGF).

Belongs to the ATPase B chain family. F-type ATPases have 2 components, F(1) - the catalytic core - and F(0) - the membrane proton channel. F(1) has five subunits: alpha(3), beta(3), gamma(1), delta(1), epsilon(1). F(0) has three main subunits: a(1), b(2) and c(10-14). The alpha and beta chains form an alternating ring which encloses part of the gamma chain. F(1) is attached to F(0) by a central stalk formed by the gamma and epsilon chains, while a peripheral stalk is formed by the delta and b chains.

It localises to the cell membrane. In terms of biological role, f(1)F(0) ATP synthase produces ATP from ADP in the presence of a proton or sodium gradient. F-type ATPases consist of two structural domains, F(1) containing the extramembraneous catalytic core and F(0) containing the membrane proton channel, linked together by a central stalk and a peripheral stalk. During catalysis, ATP synthesis in the catalytic domain of F(1) is coupled via a rotary mechanism of the central stalk subunits to proton translocation. Functionally, component of the F(0) channel, it forms part of the peripheral stalk, linking F(1) to F(0). This Streptomyces lividans protein is ATP synthase subunit b.